The sequence spans 209 residues: GTP cyclohydrolase 1 (209 aa).

Residues Cys100, His103, and Cys171 each coordinate Zn(2+).

It belongs to the GTP cyclohydrolase I family. Toroid-shaped homodecamer, composed of two pentamers of five dimers.

The enzyme catalyses GTP + H2O = 7,8-dihydroneopterin 3'-triphosphate + formate + H(+). The protein operates within cofactor biosynthesis; 7,8-dihydroneopterin triphosphate biosynthesis; 7,8-dihydroneopterin triphosphate from GTP: step 1/1. This Ralstonia nicotianae (strain ATCC BAA-1114 / GMI1000) (Ralstonia solanacearum) protein is GTP cyclohydrolase 1.